The sequence spans 68 residues: Probable tautomerase Cj0270 (68 aa).

The Proton acceptor; via imino nitrogen role is filled by Pro-2.

This sequence belongs to the 4-oxalocrotonate tautomerase family.

This Campylobacter jejuni subsp. jejuni serotype O:2 (strain ATCC 700819 / NCTC 11168) protein is Probable tautomerase Cj0270.